The sequence spans 359 residues: 4-galactosyl-N-acetylglucosaminide 3-alpha-L-fucosyltransferase 9 (359 aa).

The Cytoplasmic portion of the chain corresponds to 1 to 11 (MTSTSKGILRP). Residues 12–32 (FLIVCIILGCFMACLLIYIKP) traverse the membrane as a helical; Signal-anchor for type II membrane protein segment. Residues 33 to 359 (TNSWIFSPME…VGNLEKWFWN (327 aa)) are Lumenal-facing. N-linked (GlcNAc...) asparagine glycosylation occurs at asparagine 62. Residues 63–168 (ETTILVWVWP…RRDSDIQVPY (106 aa)) are acceptor-binding. Glutamine 75 serves as a coordination point for a beta-D-galactosyl-(1-&gt;4)-N-acetyl-beta-D-glucosaminyl derivative. 3 disulfides stabilise this stretch: cysteine 82/cysteine 335, cysteine 91/cysteine 338, and cysteine 190/cysteine 238. An N-linked (GlcNAc...) asparagine glycan is attached at asparagine 101. An a beta-D-galactosyl-(1-&gt;4)-N-acetyl-beta-D-glucosaminyl derivative-binding site is contributed by glutamate 137. Glutamate 137 (nucleophile) is an active-site residue. Glutamate 137 is a GDP-beta-L-fucose binding site. An N-linked (GlcNAc...) asparagine glycan is attached at asparagine 153. GDP-beta-L-fucose-binding residues include tyrosine 168, valine 192, serine 194, asparagine 195, arginine 202, valine 226, tyrosine 241, asparagine 246, tyrosine 252, glutamate 255, and lysine 256. The segment at 169–326 (GFLTVSTNPF…NWRKDFTVNL (158 aa)) is donor-binding. The interval 327-359 (PRFWESHACLACDHVKRHQEYKSVGNLEKWFWN) is acceptor-binding.

This sequence belongs to the glycosyltransferase 10 family. As to quaternary structure, homodimer. N-glycosylated with complex-type N-glycans. The glycan alpha-D-Man-(1-&gt;3)-beta-D-Man-(1-&gt;4)-GlcNAc-(1-&gt;4)-GlcNAc is attached at Asn-153. In terms of tissue distribution, strongly expressed in forebrain and stomach, lower expression in spleen and peripheral blood leukocytes, and no expression in small intestine, colon, liver, lung, kidney, adrenal cortex or uterus. Highly expressed in granulocytes. Not expressed in monocytes.

The protein resides in the golgi apparatus. Its subcellular location is the trans-Golgi network membrane. The protein localises to the golgi apparatus membrane. The catalysed reaction is a beta-D-galactosyl-(1-&gt;4)-N-acetyl-beta-D-glucosaminyl derivative + GDP-beta-L-fucose = a beta-D-galactosyl-(1-&gt;4)-[alpha-L-fucosyl-(1-&gt;3)]-N-acetyl-beta-D-glucosaminyl derivative + GDP + H(+). It catalyses the reaction an alpha-Neu5Ac-(2-&gt;3)-beta-D-Gal-(1-&gt;4)-beta-D-GlcNAc-(1-&gt;3)-beta-D-Gal-(1-&gt;4)-beta-D-GlcNAc derivative + GDP-beta-L-fucose = an alpha-Neu5Ac-(2-&gt;3)-beta-D-Gal-(1-&gt;4)-beta-D-GlcNAc-(1-&gt;3)-beta-D-Gal-(1-&gt;4)-[alpha-L-Fuc-(1-&gt;3)]-beta-D-GlcNAc derivative + GDP + H(+). It carries out the reaction alpha-N-glycoloylneuraminosyl-(2-&gt;3)-beta-D-galactosyl-(1-&gt;4)-N-acetyl-beta-D-glucosaminyl-(1-&gt;3)-beta-D-galactosyl-(1-&gt;4)-N-acetyl-beta-D-glucosaminyl-(1-&gt;3)-beta-D-galactosyl-(1-&gt;4)-beta-D-glucosyl-(1&lt;-&gt;1')-ceramide + GDP-beta-L-fucose = alpha-N-glycoloylneuraminosyl-(2-&gt;3)-beta-D-galactosyl-(1-&gt;4)-N-acetyl-beta-D-glucosaminyl-(1-&gt;3)-beta-D-galactosyl-(1-&gt;4)-[alpha-L-fucosyl-(1-&gt;3)]-N-acetyl-beta-D-glucosaminyl-(1-&gt;3)-beta-D-galactosyl-(1-&gt;4)-beta-D-glucosyl-(1&lt;-&gt;1')-ceramide + GDP + H(+). The enzyme catalyses alpha-D-galactosyl-(1-&gt;3)-beta-D-galactosyl-(1-&gt;4)-N-acetyl-beta-D-glucosaminyl-(1-&gt;3)-beta-D-galactosyl-(1-&gt;4)-beta-D-glucosyl-(1&lt;-&gt;1')-ceramide + GDP-beta-L-fucose = a neolactoside IV(3)-alpha-Gal,III(3)-alpha-Fuc-nLc4Cer + GDP + H(+). The catalysed reaction is a neolactoside nLc4Cer + GDP-beta-L-fucose = a neolactoside III(3)-alpha-Fuc-nLc4Cer + GDP + H(+). It catalyses the reaction an N-acetyl-alpha-neuraminyl-(2-&gt;3)-beta-D-galactosyl-(1-&gt;4)-N-acetyl-beta-D-glucosaminyl derivative + GDP-beta-L-fucose = an alpha-Neu5Ac-(2-&gt;3)-beta-D-Gal-(1-&gt;4)-[alpha-L-Fuc-(1-&gt;3)]-beta-D-GlcNAc derivative + GDP + H(+). It carries out the reaction beta-D-Gal-(1-&gt;4)-beta-D-GlcNAc-(1-&gt;3)-beta-D-Gal-(1-&gt;4)-D-Glc + GDP-beta-L-fucose = beta-D-Gal-(1-&gt;4)-[alpha-L-Fuc-(1-&gt;3)]-beta-D-GlcNAc-(1-&gt;3)-beta-D-Gal-(1-&gt;4)-D-Glc + GDP + H(+). The enzyme catalyses an alpha-L-Fuc-(1-&gt;2)-beta-D-Gal-(1-&gt;4)-beta-D-GlcNAc derivative + GDP-beta-L-fucose = an alpha-L-Fuc-(1-&gt;2)-beta-D-Gal-(1-&gt;4)-[alpha-L-Fuc-(1-&gt;3)]-beta-D-GlcNAc derivative + GDP + H(+). It functions in the pathway protein modification; protein glycosylation. The protein operates within glycolipid biosynthesis. Activated by Mn2+. In terms of biological role, catalyzes alpha(1-&gt;3) linkage of fucosyl moiety transferred from GDP-beta-L-fucose to N-acetyl glucosamine (GlcNAc) within type 2 lactosamine (LacNAc, beta-D-Gal-(1-&gt;4)-beta-D-GlcNAc-) glycan attached to glycolipids and N- or O-linked glycoproteins. Fucosylates distal type 2 LacNAc and its fucosylated (H-type 2 LacNAc) and sialylated (sialyl-type 2 LacNAc) derivatives to form Lewis x (Lex) (CD15) and Lewis y (Ley) antigenic epitopes involved in cell adhesion and differentiation. Generates Lex epitopes in the brain, presumably playing a role in the maintenance of neuronal stemness and neurite outgrowth in progenitor neural cells. Fucosylates the internal type 2 LacNAc unit of the polylactosamine chain to form VIM-2 antigen that serves as recognition epitope for SELE. Can also modify milk oligosaccharides, in particular type 2 tetrasaccharide LNnT. This is 4-galactosyl-N-acetylglucosaminide 3-alpha-L-fucosyltransferase 9 from Homo sapiens (Human).